Reading from the N-terminus, the 196-residue chain is Glycerol-3-phosphate acyltransferase (196 aa).

Transmembrane regions (helical) follow at residues 5–25 (VYLL…IIFC), 53–73 (FSAL…VLLA), 80–100 (PSEI…PLFF), 107–127 (GVAT…AAGL), 130–150 (WLIV…TALI), and 153–173 (FYIW…CCLL).

The protein belongs to the PlsY family. In terms of assembly, probably interacts with PlsX.

Its subcellular location is the cell inner membrane. The enzyme catalyses an acyl phosphate + sn-glycerol 3-phosphate = a 1-acyl-sn-glycero-3-phosphate + phosphate. The protein operates within lipid metabolism; phospholipid metabolism. Its function is as follows. Catalyzes the transfer of an acyl group from acyl-phosphate (acyl-PO(4)) to glycerol-3-phosphate (G3P) to form lysophosphatidic acid (LPA). This enzyme utilizes acyl-phosphate as fatty acyl donor, but not acyl-CoA or acyl-ACP. The polypeptide is Glycerol-3-phosphate acyltransferase (Actinobacillus pleuropneumoniae serotype 7 (strain AP76)).